A 434-amino-acid polypeptide reads, in one-letter code: MEIEKEFHRLDQAASWAAIYQDIRHEASDFPCKVAKHPRNKNRNRYRDVSPFDHSRIKLNQGDNDYINASLIKMEEAQRSYILTQGPLPNTCGHFWEMVWEQKSRGVVMLNRVMEKGSIKCAQYWPRKEEKEMFFEDTNLKLTLISEDIKSYYTVRQLELENLTTQETREILHFHYTTWPDFGVPESPASFLNFLFKVRESGSLNPEYGPVVVHCSAGIGRSGTFCLVDTCLLLMDKRKDPSSVDVKQVLLEMRKYRMGLIQTADQLRFSYLAVIEGAKFIMGDASVQEQWKELSNEDLDPPPEHTPPPPRPPKRTSEMHNGRMHEHAEFFPKHQVVEEEIRCSVSTAEETVSDGRVFSSVPLITDSTSQDTEIRRRTVGENLHVTAHKEESKSESVEEDDENMMTTWKPFLVNICMFTFLTAGAYLCYRVCFH.

The region spanning 3–277 (IEKEFHRLDQ…RFSYLAVIEG (275 aa)) is the Tyrosine-protein phosphatase domain. A Phosphoserine modification is found at serine 50. Substrate-binding positions include aspartate 181, 215–221 (CSAGIGR), and glutamine 262. Catalysis depends on cysteine 215, which acts as the Phosphocysteine intermediate. The segment at 291–319 (WKELSNEDLDPPPEHTPPPPRPPKRTSEM) is disordered.

The protein belongs to the protein-tyrosine phosphatase family. Non-receptor class 1 subfamily. Interacts with EPHA3 (phosphorylated); dephosphorylates EPHA3 and may regulate its trafficking and function. Interacts with MET. Interacts with NCK1. Phosphorylated on serine and threonine residues near the N-terminus by casein kinase II (CK2).

It localises to the endoplasmic reticulum membrane. It catalyses the reaction O-phospho-L-tyrosyl-[protein] + H2O = L-tyrosyl-[protein] + phosphate. In terms of biological role, may play an important role in CKII- and p60c-src-induced signal transduction cascades. May regulate the EFNA5-EPHA3 signaling pathway which modulates cell reorganization and cell-cell repulsion. May also regulate the hepatocyte growth factor receptor signaling pathway through dephosphorylation of MET. This is Tyrosine-protein phosphatase non-receptor type 1 (PTPN1) from Gallus gallus (Chicken).